The primary structure comprises 155 residues: Ciliary microtubule inner protein 2C (155 aa).

It belongs to the CIMIP2 family.

Its subcellular location is the cytoplasm. The protein localises to the cytoskeleton. The protein resides in the cilium axoneme. Functionally, microtubule inner protein (MIP) part of the dynein-decorated doublet microtubules (DMTs) in cilia axoneme, which is required for motile cilia beating. The sequence is that of Ciliary microtubule inner protein 2C (cimip2ca) from Xenopus laevis (African clawed frog).